Consider the following 283-residue polypeptide: Bis(5'-nucleosyl)-tetraphosphatase, symmetrical (283 aa).

This sequence belongs to the Ap4A hydrolase family.

The catalysed reaction is P(1),P(4)-bis(5'-adenosyl) tetraphosphate + H2O = 2 ADP + 2 H(+). Its function is as follows. Hydrolyzes diadenosine 5',5'''-P1,P4-tetraphosphate to yield ADP. This Pseudomonas aeruginosa (strain LESB58) protein is Bis(5'-nucleosyl)-tetraphosphatase, symmetrical.